The sequence spans 567 residues: Cytochrome P450 monooxygenase 79 (567 aa).

A helical transmembrane segment spans residues 7–24 (ELAILAIVLLVTAVVFYT). Residues N223 and N279 are each glycosylated (N-linked (GlcNAc...) asparagine). C475 contacts heme.

The protein belongs to the cytochrome P450 family. It depends on heme as a cofactor.

Its subcellular location is the membrane. The protein operates within secondary metabolite biosynthesis. Functionally, cytochrome P450 monooxygenase that is able to use dehydroabietic acid as a substrate for oxidation. The protein is Cytochrome P450 monooxygenase 79 of Postia placenta (strain ATCC 44394 / Madison 698-R) (Brown rot fungus).